A 2769-amino-acid polypeptide reads, in one-letter code: Thyroglobulin (2769 aa).

A signal peptide spans Met1–Ala19. The residue at position 24 (Tyr24) is an Iodotyrosine; alternate. Tyr24 bears the Sulfotyrosine; alternate mark. Thyroxine; alternate is present on Tyr24. At Tyr24 the chain carries Triiodothyronine; alternate. 4 Thyroglobulin type-1 domains span residues Leu31–Cys92, Leu93–Cys160, Pro161–Cys297, and Pro298–Cys358. Intrachain disulfides connect Cys34–Cys52, Cys63–Cys70, Cys72–Cys92, Cys96–Cys120, Cys131–Cys138, Cys140–Cys160, Cys164–Cys183, and Cys194–Cys235. Tyr108 bears the Iodotyrosine mark. N-linked (GlcNAc...) (complex) asparagine; alternate glycosylation is present at Asn110. Asn110 carries N-linked (GlcNAc...) (hybrid) asparagine; alternate glycosylation. Tyr149 carries the post-translational modification Iodotyrosine; alternate. Tyr149 is modified (diiodotyrosine; alternate). 2 positions are modified to iodotyrosine: Tyr234 and Tyr258. Cystine bridges form between Cys301/Cys319, Cys330/Cys336, Cys338/Cys358, Cys364/Cys619, Cys408/Cys607, Cys630/Cys635, Cys637/Cys657, Cys661/Cys686, and Cys697/Cys702. N-linked (GlcNAc...) (complex) asparagine; alternate glycosylation is found at Asn483 and Asn495. N-linked (GlcNAc...) (hybrid) asparagine; alternate glycosylation is found at Asn483 and Asn495. Thyroglobulin type-1 domains are found at residues Ser604–Cys657, Pro658–Cys725, Pro726–Cys921, Pro922–Cys1073, Pro1074–Cys1145, and Pro1146–Cys1210. At Tyr703 the chain carries Iodotyrosine; alternate. The residue at position 703 (Tyr703) is a Thyroxine; alternate. Tyr703 bears the Triiodothyronine; alternate mark. Tyr703 carries the post-translational modification Diiodotyrosine; alternate. Intrachain disulfides connect Cys704–Cys725, Cys729–Cys762, Cys773–Cys898, Cys900–Cys921, Cys925–Cys1031, Cys1042–Cys1049, Cys1051–Cys1073, Cys1077–Cys1108, Cys1126–Cys1145, Cys1149–Cys1169, Cys1181–Cys1188, Cys1190–Cys1210, Cys1215–Cys1264, Cys1231–Cys1245, Cys1306–Cys1356, and Cys1331–Cys1347. Residue Tyr784 is modified to Iodotyrosine. Asn853 carries N-linked (GlcNAc...) (complex) asparagine; alternate glycosylation. N-linked (GlcNAc...) (hybrid) asparagine; alternate glycosylation is present at Asn853. Tyr866 carries the post-translational modification Iodotyrosine; alternate. Position 866 is a diiodotyrosine; alternate (Tyr866). Tyr883 carries the diiodotyrosine modification. The N-linked (GlcNAc...) (complex) asparagine; alternate glycan is linked to Asn947. The N-linked (GlcNAc...) (hybrid) asparagine; alternate glycan is linked to Asn947. Tyr992 is subject to Iodotyrosine; alternate. Tyr992 bears the Diiodotyrosine; alternate mark. An N-linked (GlcNAc...) (complex) asparagine; alternate glycan is attached at Asn1140. Asn1140 carries an N-linked (GlcNAc...) (hybrid) asparagine; alternate glycan. Iodotyrosine is present on Tyr1310. The residue at position 1310 (Tyr1310) is a Thyroxine. Asn1365 is a glycosylation site (N-linked (GlcNAc...) (high mannose) asparagine). Disulfide bonds link Cys1441/Cys1461, Cys1464/Cys1475, Cys1478/Cys1492, Cys1495/Cys1512, Cys1516/Cys1525, Cys1545/Cys1567, Cys1605/Cys1629, Cys1609/Cys1615, Cys1641/Cys1664, Cys1726/Cys1751, Cys1730/Cys1736, Cys1735/Cys1836, and Cys1762/Cys1779. 3 Type II repeats span residues Ala1458–Gln1471, Asp1472–Gly1488, and Ser1489–Gly1505. Iodotyrosine; alternate is present on Tyr1469. Tyr1469 is subject to Diiodotyrosine; alternate. The Thyroglobulin type-1 11 domain maps to Val1513–Cys1567. One copy of the Type IIIA repeat lies at Cys1605–Phe1725. The Type IIIB repeat unit spans residues Cys1726 to Trp1893. Residue Asn1776 is glycosylated (N-linked (GlcNAc...) (complex) asparagine; alternate). Asn1776 is a glycosylation site (N-linked (GlcNAc...) (hybrid) asparagine; alternate). Residues Met1827 to Pro1842 are compositionally biased toward basic and acidic residues. Residues Met1827–Asp1851 are disordered. Asn1870 carries N-linked (GlcNAc...) (complex) asparagine; alternate glycosylation. N-linked (GlcNAc...) (hybrid) asparagine; alternate glycosylation is present at Asn1870. 7 cysteine pairs are disulfide-bonded: Cys1894/Cys1920, Cys1898/Cys1905, Cys1929/Cys1940, Cys1997/Cys2025, Cys2001/Cys2007, Cys2006/Cys2077, and Cys2036/Cys2049. Residues Cys1894–Glu1996 form a Type IIIA repeat. The stretch at Cys1997–Arg2130 is one Type IIIB repeat. N-linked (GlcNAc...) (high mannose) asparagine glycosylation occurs at Asn2014. The N-linked (GlcNAc...) (high mannose) asparagine glycan is linked to Asn2123. 3 disulfide bridges follow: Cys2131–Cys2155, Cys2135–Cys2141, and Cys2164–Cys2173. The Type IIIA repeat unit spans residues Cys2131–Pro2188. Tyr2185 carries the post-translational modification Iodotyrosine. The tract at residues Asn2189 to Lys2769 is cholinesterase-like (ChEL). A glycan (N-linked (GlcNAc...) (complex) asparagine; alternate) is linked at Asn2251. A glycan (N-linked (GlcNAc...) (hybrid) asparagine; alternate) is linked at Asn2251. N-linked (GlcNAc...) (high mannose) asparagine glycosylation occurs at Asn2296. Residues Cys2443 and Cys2454 are joined by a disulfide bond. Residue Tyr2541 is modified to Thyroxine. Tyr2574 is subject to Iodotyrosine; alternate. At Tyr2574 the chain carries Thyroxine; alternate. Tyr2574 carries the post-translational modification Triiodothyronine; alternate. Tyr2574 carries the post-translational modification Diiodotyrosine; alternate. 2 positions are modified to iodotyrosine: Tyr2588 and Tyr2618. Cys2592 and Cys2716 are disulfide-bonded. At Tyr2698 the chain carries Diiodotyrosine. Residues Ala2730–Lys2769 are disordered. Position 2767 is an iodotyrosine; alternate (Tyr2767). Tyr2767 is modified (thyroxine; alternate). At Tyr2767 the chain carries Triiodothyronine; alternate. Tyr2767 bears the Diiodotyrosine; alternate mark.

Belongs to the type-B carboxylesterase/lipase family. As to quaternary structure, monomer. Homodimer (via ChEL region); occurs in the endoplasmic reticulum and is required for export to the Golgi apparatus. Homooligomer; disulfide-linked; stored in this form in the thyroid follicle lumen. In terms of processing, iodinated on tyrosine residues by TPO. There are 4 pairs of iodinated tyrosines used for coupling: acceptor Tyr-24 is coupled to donor Tyr-149 or Tyr-234, acceptor Tyr-2574 is coupled to donor Tyr-2541, acceptor Tyr-2767 in monomer 1 is coupled to donor Tyr-2767 in monomer 2 and acceptor Tyr-1310 in monomer 1 is coupled to donor Tyr-108 in monomer 2. Post-translationally, sulfated tyrosines are desulfated during iodination. Undergoes sequential proteolysis by cathepsins to release thyroxine (T4) and triiodothyronine (T3) hormones. In the thyroid follicle lumen, cross-linked TG (storage form) is solubilized by limited proteolysis mediated by cathepsins CTSB and/or CTSL. Partially cleaved TG is further processed by CTSK/cathepsin K and/or CTSL resulting in the release of T4. Following endocytosis, further processing occurs leading to the release of T3 and more T4 hormones. As to expression, specifically expressed in the thyroid gland.

It is found in the secreted. Functionally, acts as a substrate for the production of iodinated thyroid hormones thyroxine (T4) and triiodothyronine (T3). The synthesis of T3 and T4 involves iodination of selected tyrosine residues of TG/thyroglobulin followed by their oxidative coupling. Following TG re-internalization and lysosomal-mediated proteolysis, T3 and T4 are released from the polypeptide backbone leading to their secretion into the bloodstream. One dimer produces 7 thyroid hormone molecules. The sequence is that of Thyroglobulin (TG) from Bos taurus (Bovine).